The sequence spans 512 residues: Immunoglobulin delta heavy chain (512 aa).

2 consecutive Ig-like domains span residues 1–97 (RLQL…MYYC) and 135–227 (PDVF…KEIF). The interval 1–129 (RLQLQESGPG…GQGTTVHVSS (129 aa)) is variable (V) domain, involved in antigen recognition. 2 disulfide bridges follow: Cys22/Cys97 and Cys157/Cys213. Positions 130–512 (APTKAPDVFP…VSYVTDHGPM (383 aa)) are constant (C) domain. A disordered region spans residues 225–296 (EIFRWPESPK…TPECPSHTQP (72 aa)). Polar residues predominate over residues 235-247 (AQASSVPTAQPQA). A glycan (O-linked (GalNAc...) serine) is linked at Ser238. O-linked (GalNAc...) threonine glycosylation is found at Thr255, Thr256, Thr260, and Thr261. The span at 267 to 287 (GGEEKKKEKEKEEQEERETKT) shows a compositional bias: basic and acidic residues. Ig-like domains are found at residues 304-392 (PAVQ…RLMA) and 396-502 (PAAQ…RSLE). Intrachain disulfides connect Cys319/Cys378 and Cys423/Cys484. N-linked (GlcNAc...) asparagine glycans are attached at residues Asn354, Asn445, and Asn496.

As to quaternary structure, immunoglobulins are composed of two identical heavy chains and two identical light chains; disulfide-linked. An IgD molecule contains thus a delta heavy chain combined with either a kappa or a lambda light chains. Kappa light chains are found predominantly on the membrane IgD (mIgD) form and lambda on the secreted IgD (sIgD) form, this fact is poorly understood. Membrane-bound IgD molecules are non-covalently associated with a heterodimer of CD79A and CD79B.

The protein resides in the secreted. The protein localises to the cell membrane. Its function is as follows. Immunoglobulins, also known as antibodies, are membrane-bound or secreted glycoproteins produced by B lymphocytes. In the recognition phase of humoral immunity, the membrane-bound immunoglobulins serve as receptors which, upon binding of a specific antigen, trigger the clonal expansion and differentiation of B lymphocytes into immunoglobulins-secreting plasma cells. Secreted immunoglobulins mediate the effector phase of humoral immunity, which results in the elimination of bound antigens. The antigen binding site is formed by the variable domain of one heavy chain, together with that of its associated light chain. Thus, each immunoglobulin has two antigen binding sites with remarkable affinity for a particular antigen. The variable domains are assembled by a process called V-(D)-J rearrangement and can then be subjected to somatic hypermutations which, after exposure to antigen and selection, allow affinity maturation for a particular antigen. IgD is the major antigen receptor isotype on the surface of most peripheral B cells, where it is coexpressed with IgM. The membrane-bound IgD (mIgD) induces the phosphorylation of CD79A and CD79B by the Src family of protein tyrosine kinases. Soluble IgD (sIgD) concentration in serum is below those of IgG, IgA, and IgM but much higher than that of IgE. IgM and IgD molecules present on B cells have identical V regions and antigen-binding sites. After the antigen binds to the B cell receptor, the secreted form sIgD is shut off. IgD is a potent inducer of TNF, IL1B, and IL1RN. IgD also induces release of IL6, IL10, and LIF from peripheral blood mononuclear cells. Monocytes seem to be the main producers of cytokines in vitro in the presence of IgD. In Homo sapiens (Human), this protein is Immunoglobulin delta heavy chain.